A 256-amino-acid chain; its full sequence is Gluconate 5-dehydrogenase (256 aa).

Position 15–39 (15–39) interacts with NADP(+); that stretch reads LVTGASRGIGLTLAKGLARYGAEVV. S147 serves as a coordination point for substrate. The Proton acceptor role is filled by Y160.

Belongs to the short-chain dehydrogenases/reductases (SDR) family. In terms of assembly, homodimer.

The protein resides in the cytoplasm. The enzyme catalyses D-gluconate + NADP(+) = 5-dehydro-D-gluconate + NADPH + H(+). Functionally, catalyzes the reversible NADP-dependent oxidation of gluconate to 5-ketogluconate. Is involved in the non-phosphorylative, ketogenic oxidation of glucose. Is almost inactive with NAD as cosubstrate. Displays high substrate specificity since D-Glucose, D-sorbitol, and D-mannitol are not oxidized by the enzyme, and 2-ketogluconate and L-sorbose are not reduced. Can accept D-fructose as a substrate, with a rate that is only 10% of the rate of 5-ketogluconate reduction. This chain is Gluconate 5-dehydrogenase, found in Gluconobacter oxydans (strain 621H) (Gluconobacter suboxydans).